The chain runs to 353 residues: Ribosome biogenesis protein BRX1 homolog (353 aa).

A disordered region spans residues 1-50; the sequence is MAATKRKRRGGLEVQAKKPKRSSKDAGQPAKQADVAKEAEEENRDRIPGP. A compositionally biased stretch (basic and acidic residues) spans 34–47; the sequence is DVAKEAEEENRDRI. Residues 60–249 form the Brix domain; sequence ERILIFSSRG…LIKIFQGSFG (190 aa). A Glycyl lysine isopeptide (Lys-Gly) (interchain with G-Cter in SUMO2) cross-link involves residue lysine 160. Serine 261 is subject to Phosphoserine. N6-acetyllysine is present on lysine 276. Glycyl lysine isopeptide (Lys-Gly) (interchain with G-Cter in SUMO2) cross-links involve residues lysine 314 and lysine 322. The segment covering 334–344 has biased composition (basic residues); that stretch reads RRIYKRHRKLQ. The disordered stretch occupies residues 334-353; that stretch reads RRIYKRHRKLQQKMSRGSAK.

This sequence belongs to the BRX1 family.

It localises to the nucleus. It is found in the nucleolus. In terms of biological role, required for biogenesis of the 60S ribosomal subunit. The sequence is that of Ribosome biogenesis protein BRX1 homolog (Brix1) from Mus musculus (Mouse).